The sequence spans 674 residues: UvrABC system protein B (674 aa).

One can recognise a Helicase ATP-binding domain in the interval 26-414 (EGLDSGLAHQ…SGNDIAEQVV (389 aa)). 39 to 46 (GVTGSGKT) serves as a coordination point for ATP. The Beta-hairpin motif lies at 92–115 (YYDYYQPEAYVPTTDTFIEKDASV). Residues 432–586 (QVDDLLSEIR…ALHNKKNGIT (155 aa)) form the Helicase C-terminal domain. The 36-residue stretch at 634–669 (ELEIQRLETEMYDLAQNLEFEKAAEARDKIHTLRQQ) folds into the UVR domain.

It belongs to the UvrB family. Forms a heterotetramer with UvrA during the search for lesions. Interacts with UvrC in an incision complex.

It localises to the cytoplasm. The UvrABC repair system catalyzes the recognition and processing of DNA lesions. A damage recognition complex composed of 2 UvrA and 2 UvrB subunits scans DNA for abnormalities. Upon binding of the UvrA(2)B(2) complex to a putative damaged site, the DNA wraps around one UvrB monomer. DNA wrap is dependent on ATP binding by UvrB and probably causes local melting of the DNA helix, facilitating insertion of UvrB beta-hairpin between the DNA strands. Then UvrB probes one DNA strand for the presence of a lesion. If a lesion is found the UvrA subunits dissociate and the UvrB-DNA preincision complex is formed. This complex is subsequently bound by UvrC and the second UvrB is released. If no lesion is found, the DNA wraps around the other UvrB subunit that will check the other stand for damage. The polypeptide is UvrABC system protein B (Photobacterium profundum (strain SS9)).